The chain runs to 168 residues: uncharacterized protein (168 aa).

3 disordered regions span residues 1-35 (MGSSKSSKKDKQIHPFGTDVSTFRKLSSKEKKKLD), 48-97 (KVKK…DKGN), and 126-168 (ASIT…GLGM). Residues 29 to 95 (KEKKKLDEKE…KNSLSRSQDK (67 aa)) adopt a coiled-coil conformation. Residues 68–85 (LAEDPMVKNVAENDHDQM) are compositionally biased toward basic and acidic residues. The segment covering 126 to 139 (ASITESSPSAQSNK) has biased composition (polar residues). Residues 140–150 (TNDKQREKELE) show a composition bias toward basic and acidic residues. The span at 157 to 168 (VLHKGTKKGLGM) shows a compositional bias: basic residues.

This is an uncharacterized protein from Schizosaccharomyces pombe (strain 972 / ATCC 24843) (Fission yeast).